Consider the following 72-residue polypeptide: Translation initiation factor IF-1 (72 aa).

Residues Met1 to Lys72 form the S1-like domain.

Belongs to the IF-1 family. As to quaternary structure, component of the 30S ribosomal translation pre-initiation complex which assembles on the 30S ribosome in the order IF-2 and IF-3, IF-1 and N-formylmethionyl-tRNA(fMet); mRNA recruitment can occur at any time during PIC assembly.

The protein resides in the cytoplasm. In terms of biological role, one of the essential components for the initiation of protein synthesis. Stabilizes the binding of IF-2 and IF-3 on the 30S subunit to which N-formylmethionyl-tRNA(fMet) subsequently binds. Helps modulate mRNA selection, yielding the 30S pre-initiation complex (PIC). Upon addition of the 50S ribosomal subunit IF-1, IF-2 and IF-3 are released leaving the mature 70S translation initiation complex. The protein is Translation initiation factor IF-1 of Methylibium petroleiphilum (strain ATCC BAA-1232 / LMG 22953 / PM1).